We begin with the raw amino-acid sequence, 206 residues long: Protein-methionine-sulfoxide reductase heme-binding subunit MsrQ (206 aa).

6 helical membrane-spanning segments follow: residues 14–34 (IKPL…WLGA), 45–65 (FLTR…LAIT), 82–102 (MCGL…VWWD), 118–138 (PFIT…ATST), 149–169 (WQVL…HFWW), and 179–199 (QPLL…AAWW).

Belongs to the MsrQ family. As to quaternary structure, heterodimer of a catalytic subunit (MsrP) and a heme-binding subunit (MsrQ). The cofactor is FMN. Heme b is required as a cofactor.

The protein localises to the cell inner membrane. Functionally, part of the MsrPQ system that repairs oxidized periplasmic proteins containing methionine sulfoxide residues (Met-O), using respiratory chain electrons. Thus protects these proteins from oxidative-stress damage caused by reactive species of oxygen and chlorine generated by the host defense mechanisms. MsrPQ is essential for the maintenance of envelope integrity under bleach stress, rescuing a wide series of structurally unrelated periplasmic proteins from methionine oxidation. MsrQ provides electrons for reduction to the reductase catalytic subunit MsrP, using the quinone pool of the respiratory chain. The polypeptide is Protein-methionine-sulfoxide reductase heme-binding subunit MsrQ (Bordetella bronchiseptica (strain ATCC BAA-588 / NCTC 13252 / RB50) (Alcaligenes bronchisepticus)).